Here is a 236-residue protein sequence, read N- to C-terminus: Phosphoribosylaminoimidazole-succinocarboxamide synthase (236 aa).

It belongs to the SAICAR synthetase family.

It catalyses the reaction 5-amino-1-(5-phospho-D-ribosyl)imidazole-4-carboxylate + L-aspartate + ATP = (2S)-2-[5-amino-1-(5-phospho-beta-D-ribosyl)imidazole-4-carboxamido]succinate + ADP + phosphate + 2 H(+). It participates in purine metabolism; IMP biosynthesis via de novo pathway; 5-amino-1-(5-phospho-D-ribosyl)imidazole-4-carboxamide from 5-amino-1-(5-phospho-D-ribosyl)imidazole-4-carboxylate: step 1/2. The protein is Phosphoribosylaminoimidazole-succinocarboxamide synthase of Chlorobium phaeobacteroides (strain BS1).